The sequence spans 396 residues: Acyl-[acyl-carrier-protein] desaturase, chloroplastic (396 aa).

A chloroplast-targeting transit peptide spans 1–33 (MALKFHPLTSQSPKLPSFRMPQLASLRSPKFVM). Positions 138, 176, 179, 229, 262, and 265 each coordinate Fe cation.

This sequence belongs to the fatty acid desaturase type 2 family. As to quaternary structure, homodimer. Fe(2+) is required as a cofactor.

Its subcellular location is the plastid. The protein localises to the chloroplast. The protein operates within lipid metabolism; fatty acid metabolism. Introduces a cis double bond in the acyl chain of an acyl-[acyl-carrier protein]. The chain is Acyl-[acyl-carrier-protein] desaturase, chloroplastic from Cucumis sativus (Cucumber).